A 347-amino-acid polypeptide reads, in one-letter code: DNA-directed RNA polymerase subunit alpha (347 aa).

The interval 1 to 243 (MLIKQGDRLI…DQISVFINFD (243 aa)) is alpha N-terminal domain (alpha-NTD). Residues 260-347 (VNENLFKGID…EWKRKQQNEA (88 aa)) are alpha C-terminal domain (alpha-CTD).

Belongs to the RNA polymerase alpha chain family. Homodimer. The RNAP catalytic core consists of 2 alpha, 1 beta, 1 beta' and 1 omega subunit. When a sigma factor is associated with the core the holoenzyme is formed, which can initiate transcription.

The enzyme catalyses RNA(n) + a ribonucleoside 5'-triphosphate = RNA(n+1) + diphosphate. Its function is as follows. DNA-dependent RNA polymerase catalyzes the transcription of DNA into RNA using the four ribonucleoside triphosphates as substrates. The sequence is that of DNA-directed RNA polymerase subunit alpha from Nitratidesulfovibrio vulgaris (strain DSM 19637 / Miyazaki F) (Desulfovibrio vulgaris).